A 530-amino-acid chain; its full sequence is ATP-dependent RNA helicase DBP3 (530 aa).

A compositionally biased stretch (basic and acidic residues) spans 1–20 (MSKDEIKDKKRKSEEYEVVD). Residues 1–77 (MSKDEIKDKK…VASVSTSSTV (77 aa)) form a disordered region. Residues 19-58 (VDKKKHKKDKKDKKEKKDKKEKKLKKDKKDKKDKKETKSE) adopt a coiled-coil conformation. A compositionally biased stretch (basic residues) spans 21 to 50 (KKKHKKDKKDKKEKKDKKEKKLKKDKKDKK). A compositionally biased stretch (low complexity) spans 67 to 77 (SVASVSTSSTV). Positions 117 to 143 (LSFSHISLDSRIQAEISKFPKPTPIQA) match the Q motif motif. Residues 146–322 (WPYLLAGKDV…STFMNSPIKV (177 aa)) form the Helicase ATP-binding domain. An ATP-binding site is contributed by 159-166 (AETGSGKT). The DEAD box signature appears at 269–272 (DEAD). The 150-residue stretch at 351 to 500 (KLLELLKKYQ…PVPEELKKFG (150 aa)) folds into the Helicase C-terminal domain.

It belongs to the DEAD box helicase family. DDX5/DBP2 subfamily.

Its subcellular location is the nucleus. It localises to the nucleolus. The catalysed reaction is ATP + H2O = ADP + phosphate + H(+). Functionally, ATP-dependent RNA helicase required for 60S ribosomal subunit synthesis. Involved in efficient pre-rRNA processing, predominantly at site A3, which is necessary for the normal formation of 25S and 5.8S rRNAs. This is ATP-dependent RNA helicase DBP3 (DBP3) from Vanderwaltozyma polyspora (strain ATCC 22028 / DSM 70294 / BCRC 21397 / CBS 2163 / NBRC 10782 / NRRL Y-8283 / UCD 57-17) (Kluyveromyces polysporus).